Consider the following 409-residue polypeptide: MYENLLPRFLRYVKTETRSDATSTTTPSTQTQVAFAQTLKKELEELGMSDVIYNETNGFVIATLPSNVEKDVRSIGFIAHMDTADFNAVNVSPQIVENYDGESTIPLDKEGKFTLNTKDFPNLKNYRGETLITTDGTTLLGADDKSGIAEIMTAMEYLINHPEIKHGTIRVAFGPDEEIGVGADKFDVAQFNVDFAYTMDGGPVGELQFETFNAAQAEITIQGKNVHPGTAKNTMINALQLGIDFHNALPADEVPEKTAGEEGFYHLAAFAGTPEEATMTYIIRDHNREIFEARKAKIKEIQQTLNAPFDEERIKVDLFDQYYNMREVIEKDMSIVEIAKQAMEELSIQPIIEPVRGGTDGSKISYLGIPTPNIFAGGENMHGRFEFVSLQAMEKATNVIIKIAELNAK.

His80 contributes to the Zn(2+) binding site. The active site involves Asp82. Residue Asp143 participates in Zn(2+) binding. Residue Glu177 is the Proton acceptor of the active site. The Zn(2+) site is built by Glu178, Asp200, and His382.

The protein belongs to the peptidase M20B family. It depends on Zn(2+) as a cofactor.

It is found in the cytoplasm. The catalysed reaction is Release of the N-terminal residue from a tripeptide.. Cleaves the N-terminal amino acid of tripeptides. The chain is Peptidase T from Enterococcus faecalis (strain ATCC 700802 / V583).